Consider the following 592-residue polypeptide: Putative D-/L-hydantoinase subunit B (592 aa).

This sequence belongs to the HyuB family. As to quaternary structure, may form a complex with HyuA.

Functionally, involved in the asymmetric conversion of racemic 5-substituted hydantoins to the corresponding L-amino acids. HyuA and HyuB are both required for the conversion of D- and L-5-substituted hydantoins to corresponding N-carbamoyl-D- and N-carbamoyl-L-amino acids, respectively. The sequence is that of Putative D-/L-hydantoinase subunit B from Pseudomonas sp. (strain NS671).